The primary structure comprises 686 residues: Probable metal-nicotianamine transporter YSL4 (686 aa).

14 consecutive transmembrane segments (helical) span residues 27–47 (WLVTPRAMAVAVLLGIVFCFV), 53–73 (MMTGFVPALNMPVTVLSFFLL), 96–116 (MFLITCVITCLNLAITGGFAT), 151–171 (FFLIGMAGVLSNIPLNQIMII), 203–223 (VMTIFKVFFGSFSWSIFQWFY), 264–284 (IVNFGLLFGAIISWGFLYPYL), 308–328 (VFISVTLIVTDGLINFLILVT), 373–393 (IPMFVPVAAYVAWTAISMVAM), 405–425 (VGVLYLAIPVVGFCNTYATGL), 441–461 (IFAAWIARPGAIVASLLVSGI), 488–508 (AMIAGQVFGVALSSVVSPCIF), 554–574 (CVELCVIAVLVTIAIDALVLV), 596–616 (FFAGSYFTLDMCLGGLLLLLW), and 629–649 (AAVAAGLICGEGLFTLPSALL).

It belongs to the YSL (TC 2.A.67.2) family.

It localises to the membrane. Functionally, may be involved in the transport of nicotianamine-chelated metals. This chain is Probable metal-nicotianamine transporter YSL4 (YSL4), found in Oryza sativa subsp. japonica (Rice).